Consider the following 552-residue polypeptide: Probable protein kinase UbiB (552 aa).

A Protein kinase domain is found at 121–504 (HFDTVPLASA…QGLQRRVVNA (384 aa)). ATP-binding positions include 127–135 (LASASISQV) and Lys-149. Asp-284 serves as the catalytic Proton acceptor. A run of 2 helical transmembrane segments spans residues 501–521 (VVNA…YGLH) and 526–546 (YLGA…LALF).

The protein belongs to the ABC1 family. UbiB subfamily.

It localises to the cell inner membrane. It functions in the pathway cofactor biosynthesis; ubiquinone biosynthesis [regulation]. Is probably a protein kinase regulator of UbiI activity which is involved in aerobic coenzyme Q (ubiquinone) biosynthesis. The sequence is that of Probable protein kinase UbiB from Xylella fastidiosa (strain 9a5c).